The following is a 131-amino-acid chain: Phosphoribosyl-AMP cyclohydrolase (131 aa).

Mg(2+) is bound at residue Asp78. Position 79 (Cys79) interacts with Zn(2+). Positions 80 and 82 each coordinate Mg(2+). Cys96 and Cys103 together coordinate Zn(2+).

This sequence belongs to the PRA-CH family. As to quaternary structure, homodimer. It depends on Mg(2+) as a cofactor. Zn(2+) is required as a cofactor.

Its subcellular location is the cytoplasm. It carries out the reaction 1-(5-phospho-beta-D-ribosyl)-5'-AMP + H2O = 1-(5-phospho-beta-D-ribosyl)-5-[(5-phospho-beta-D-ribosylamino)methylideneamino]imidazole-4-carboxamide. It participates in amino-acid biosynthesis; L-histidine biosynthesis; L-histidine from 5-phospho-alpha-D-ribose 1-diphosphate: step 3/9. Functionally, catalyzes the hydrolysis of the adenine ring of phosphoribosyl-AMP. The protein is Phosphoribosyl-AMP cyclohydrolase of Neisseria meningitidis serogroup A / serotype 4A (strain DSM 15465 / Z2491).